The following is a 76-amino-acid chain: Precursor of CEP7 (76 aa).

The signal sequence occupies residues 1 to 27 (MAKCTLTSLILLLIVLVLIQESHIVEG). The propeptide occupies 28–61 (RPLKSSRISNVSKKFAAGNSNLSSKLTTEDHSLD). 2 N-linked (GlcNAc...) asparagine glycosylation sites follow: Asn37 and Asn48. Positions 49–76 (LSSKLTTEDHSLDAFRPTNPGNSPGIGH) are disordered. 3 positions are modified to hydroxyproline: Pro65, Pro68, and Pro72.

It belongs to the C-terminally encoded plant signaling peptide (CEP) family. In terms of assembly, interacts with CEP receptors (e.g. CEPR1 and CEPR2). The mature small signaling peptide is generated by proteolytic processing of the longer precursor.

The protein resides in the secreted. The protein localises to the extracellular space. It localises to the apoplast. Extracellular signaling peptide that may regulate primary root growth rate and systemic nitrogen (N)-demand signaling. Mediates up-regulation of genes involved in N uptake and assimilation pathways. The chain is Precursor of CEP7 from Arabidopsis thaliana (Mouse-ear cress).